The primary structure comprises 153 residues: Nucleoside diphosphate kinase (153 aa).

N-acetylalanine is present on Ala-2. Residues Lys-13, Phe-61, Arg-89, Thr-95, Arg-106, and Asn-116 each contribute to the ATP site. His-119 functions as the Pros-phosphohistidine intermediate in the catalytic mechanism. Position 126 is a phosphoserine (Ser-126).

This sequence belongs to the NDK family. In terms of assembly, homohexamer. It depends on Mg(2+) as a cofactor.

Its subcellular location is the cytoplasm. It is found in the cytoskeleton. The enzyme catalyses a 2'-deoxyribonucleoside 5'-diphosphate + ATP = a 2'-deoxyribonucleoside 5'-triphosphate + ADP. It carries out the reaction a ribonucleoside 5'-diphosphate + ATP = a ribonucleoside 5'-triphosphate + ADP. Functionally, major role in the synthesis of nucleoside triphosphates other than ATP. The ATP gamma phosphate is transferred to the NDP beta phosphate via a ping-pong mechanism, using a phosphorylated active-site intermediate. In Drosophila melanogaster (Fruit fly), this protein is Nucleoside diphosphate kinase (awd).